An 81-amino-acid polypeptide reads, in one-letter code: Large ribosomal subunit protein bL31B (81 aa).

It belongs to the bacterial ribosomal protein bL31 family. Type B subfamily. In terms of assembly, part of the 50S ribosomal subunit.

The chain is Large ribosomal subunit protein bL31B from Borrelia garinii subsp. bavariensis (strain ATCC BAA-2496 / DSM 23469 / PBi) (Borreliella bavariensis).